The sequence spans 597 residues: DNA ligase (597 aa).

Glu-262 serves as a coordination point for ATP. The active-site N6-AMP-lysine intermediate is the Lys-264. ATP contacts are provided by Arg-269, Arg-284, Glu-314, Phe-354, Arg-431, and Lys-437.

Belongs to the ATP-dependent DNA ligase family. Mg(2+) serves as cofactor. Requires Mn(2+) as cofactor.

The enzyme catalyses ATP + (deoxyribonucleotide)n-3'-hydroxyl + 5'-phospho-(deoxyribonucleotide)m = (deoxyribonucleotide)n+m + AMP + diphosphate.. It catalyses the reaction ADP + (deoxyribonucleotide)n-3'-hydroxyl + 5'-phospho-(deoxyribonucleotide)m = (deoxyribonucleotide)n+m + AMP + phosphate.. The catalysed reaction is GTP + (deoxyribonucleotide)n-3'-hydroxyl + 5'-phospho-(deoxyribonucleotide)m = (deoxyribonucleotide)n+m + GMP + diphosphate.. With respect to regulation, inhibited by Ca(2+) and Zn(2+). DNA ligase that seals nicks in double-stranded DNA during DNA replication, DNA recombination and DNA repair. Can use both ATP and ADP. In Staphylothermus marinus (strain ATCC 43588 / DSM 3639 / JCM 9404 / F1), this protein is DNA ligase.